Reading from the N-terminus, the 169-residue chain is FAM231A/C-like protein LOC102723383 (169 aa).

Residues 82–140 (LIRSGSSQNESQEDQGAGLISQAGLKADNRRESSTWANEVEDRRPQCTPALNLTPSHPH) are disordered.

Belongs to the FAM231 family.

The polypeptide is FAM231A/C-like protein LOC102723383 (Homo sapiens (Human)).